Reading from the N-terminus, the 933-residue chain is Clumping factor A (933 aa).

The N-terminal stretch at 1–39 is a signal peptide; sequence MNMKKKEKHAIRKKSIGVASVLVGTLIGFGLLSSKEADA. The YSIRK-G/S signaling motif motif lies at 9–20; the sequence is HAIRKKSIGVAS. Disordered regions lie at residues 34 to 200 and 529 to 904; these read SKEA…SNKD and FNNG…SEDE. Positions 40–542 are ligand binding A region; it reads SENSVTQSDS…SGSGDGIDKP (503 aa). The span at 47 to 65 shows a compositional bias: low complexity; the sequence is SDSASNESKSNDSSSVSAA. Residues 71-105 show a composition bias toward polar residues; it reads TNVSDTKTSSNTNNGETSVAQNPAQQETTQSSSTN. 2 stretches are compositionally biased toward low complexity: residues 106 to 132 and 143 to 162; these read ATTEETPVTGEATTTTTNQANTPATTQ and NQTSNETTSNDTNTVSSVNS. Polar residues predominate over residues 163–200; that stretch reads PQNSTNAENVSTTQDTSTEATPSNNESAPQSTDASNKD. Residues 547–565 show a composition bias toward acidic residues; the sequence is QPDEPGEIEPIPEDSDSDP. Residues 566 to 598 are compositionally biased toward low complexity; that stretch reads GSDSGSDSNSDSGSDSGSDSTSDSGSDSASDSD. The span at 599–861 shows a compositional bias: acidic residues; it reads SASDSDSASD…DSDSESDSNS (263 aa). Residues 862 to 880 are compositionally biased toward low complexity; it reads DSESGSNNNVVPPNSPKNG. Positions 887 to 896 are enriched in basic and acidic residues; that stretch reads NEAKDSKEPL. The LPXTG sorting signal signature appears at 896-900; it reads LPDTG. Pentaglycyl murein peptidoglycan amidated threonine is present on T899. Residues 900-933 constitute a propeptide, removed by sortase; that stretch reads GSEDEANTSLIWGLLASIGSLLLFRRKKENKDKK.

It belongs to the serine-aspartate repeat-containing protein (SDr) family.

Its subcellular location is the secreted. It localises to the cell wall. Cell surface-associated protein implicated in virulence. Promotes bacterial attachment exclusively to the gamma-chain of human fibrinogen. Induces formation of bacterial clumps. This Staphylococcus aureus (strain COL) protein is Clumping factor A (clfA).